The chain runs to 217 residues: Elongation factor Ts (217 aa).

Residues 80-83 (TDFV) form an involved in Mg(2+) ion dislocation from EF-Tu region.

The protein belongs to the EF-Ts family.

It is found in the cytoplasm. Associates with the EF-Tu.GDP complex and induces the exchange of GDP to GTP. It remains bound to the aminoacyl-tRNA.EF-Tu.GTP complex up to the GTP hydrolysis stage on the ribosome. In Carboxydothermus hydrogenoformans (strain ATCC BAA-161 / DSM 6008 / Z-2901), this protein is Elongation factor Ts.